Reading from the N-terminus, the 526-residue chain is ATP synthase subunit alpha (526 aa).

Residue 174–181 participates in ATP binding; sequence GDRKTGKT. Residues 505-520 show a composition bias toward basic and acidic residues; it reads FEPARSEVKVETRPQE. A disordered region spans residues 505 to 526; sequence FEPARSEVKVETRPQEEEGEEG.

The protein belongs to the ATPase alpha/beta chains family. As to quaternary structure, F-type ATPases have 2 components, CF(1) - the catalytic core - and CF(0) - the membrane proton channel. CF(1) has five subunits: alpha(3), beta(3), gamma(1), delta(1), epsilon(1). CF(0) has three main subunits: a(1), b(2) and c(9-12). The alpha and beta chains form an alternating ring which encloses part of the gamma chain. CF(1) is attached to CF(0) by a central stalk formed by the gamma and epsilon chains, while a peripheral stalk is formed by the delta and b chains.

The protein resides in the cell membrane. It catalyses the reaction ATP + H2O + 4 H(+)(in) = ADP + phosphate + 5 H(+)(out). Functionally, produces ATP from ADP in the presence of a proton gradient across the membrane. The alpha chain is a regulatory subunit. This chain is ATP synthase subunit alpha, found in Rubrobacter xylanophilus (strain DSM 9941 / JCM 11954 / NBRC 16129 / PRD-1).